We begin with the raw amino-acid sequence, 112 residues long: Putative pterin-4-alpha-carbinolamine dehydratase (112 aa).

This sequence belongs to the pterin-4-alpha-carbinolamine dehydratase family.

The catalysed reaction is (4aS,6R)-4a-hydroxy-L-erythro-5,6,7,8-tetrahydrobiopterin = (6R)-L-erythro-6,7-dihydrobiopterin + H2O. The polypeptide is Putative pterin-4-alpha-carbinolamine dehydratase (Shewanella piezotolerans (strain WP3 / JCM 13877)).